The following is a 68-amino-acid chain: Small ribosomal subunit protein bS18c (68 aa).

It belongs to the bacterial ribosomal protein bS18 family. In terms of assembly, part of the 30S ribosomal subunit.

It localises to the plastid. Its subcellular location is the chloroplast. This is Small ribosomal subunit protein bS18c (rps18) from Cyanidium caldarium (Red alga).